A 217-amino-acid chain; its full sequence is Protein GrpE (217 aa).

The interval 1–63 is disordered; sequence MAETSNSENK…AADSELSLQS (63 aa). Residues 10–32 are compositionally biased toward basic and acidic residues; that stretch reads KTSEEAKASEKNSRSITLEETKL. A compositionally biased stretch (low complexity) spans 37 to 63; that stretch reads SEESTQTTESTQAQAAEAADSELSLQS.

It belongs to the GrpE family. As to quaternary structure, homodimer.

Its subcellular location is the cytoplasm. In terms of biological role, participates actively in the response to hyperosmotic and heat shock by preventing the aggregation of stress-denatured proteins, in association with DnaK and GrpE. It is the nucleotide exchange factor for DnaK and may function as a thermosensor. Unfolded proteins bind initially to DnaJ; upon interaction with the DnaJ-bound protein, DnaK hydrolyzes its bound ATP, resulting in the formation of a stable complex. GrpE releases ADP from DnaK; ATP binding to DnaK triggers the release of the substrate protein, thus completing the reaction cycle. Several rounds of ATP-dependent interactions between DnaJ, DnaK and GrpE are required for fully efficient folding. The chain is Protein GrpE from Leptospira borgpetersenii serovar Hardjo-bovis (strain JB197).